A 691-amino-acid polypeptide reads, in one-letter code: Lectin-domain containing receptor kinase VI.4 (691 aa).

The signal sequence occupies residues 1–19 (MGRAKSMVSLLLVLFLVRA). Over 20–306 (HVATTETTTE…AKKRGYNGKV (287 aa)) the chain is Extracellular. The tract at residues 26 to 273 (TTTEFIFHGF…AHYVMGWSFA (248 aa)) is legume-lectin like. Residues 307–327 (IALIVALSTVISIMLVLLFLF) form a helical membrane-spanning segment. Topologically, residues 328-691 (MMYKKRMQQE…ISSTSLISGR (364 aa)) are cytoplasmic. A Protein kinase domain is found at 363 to 641 (FKENRVVGTG…LNRDEDVPEI (279 aa)). ATP is bound by residues 369–377 (VGTGGFGIV) and Lys392. The Proton acceptor role is filled by Asp491.

This sequence in the C-terminal section; belongs to the protein kinase superfamily. Ser/Thr protein kinase family. The protein in the N-terminal section; belongs to the leguminous lectin family.

The protein resides in the cell membrane. The catalysed reaction is L-seryl-[protein] + ATP = O-phospho-L-seryl-[protein] + ADP + H(+). It carries out the reaction L-threonyl-[protein] + ATP = O-phospho-L-threonyl-[protein] + ADP + H(+). Its function is as follows. Involved in negative regulation of abscisic acid response in seed germination. The sequence is that of Lectin-domain containing receptor kinase VI.4 (LECRK64) from Arabidopsis thaliana (Mouse-ear cress).